The following is a 31-amino-acid chain: MSDIN-like toxin proprotein 4 (31 aa).

Residues 1–10 constitute a propeptide that is removed on maturation; the sequence is MSDINGTRLP. Positions 11–16 form a cross-link, cyclopeptide (Trp-Pro); sequence WLATCP. The propeptide occupies 17-31; it reads CVGEDVNPTLSRGER.

The protein belongs to the MSDIN fungal toxin family. Post-translationally, processed by the macrocyclase-peptidase enzyme POPB to yield a toxic cyclic hexapeptide. POPB first removes 10 residues from the N-terminus. Conformational trapping of the remaining peptide forces the enzyme to release this intermediate rather than proceed to macrocyclization. The enzyme rebinds the remaining peptide in a different conformation and catalyzes macrocyclization of the N-terminal 6 residues.

Its function is as follows. Probable toxin that belongs to the MSDIN-like toxin family responsible for a large number of food poisoning cases and deaths. The chain is MSDIN-like toxin proprotein 4 from Amanita phalloides (Death cap).